We begin with the raw amino-acid sequence, 571 residues long: Cytosolic Fe-S cluster assembly factor NAR1 (571 aa).

Residues C20, C62, C65, C68, C204, and C259 each contribute to the [4Fe-4S] cluster site. The interval 415–437 is disordered; it reads AKPSRMPGGKPIGSARRPNGKAS. [4Fe-4S] cluster-binding residues include C449 and C453.

It belongs to the NARF family.

Its function is as follows. Component of the cytosolic Fe/S protein assembly machinery. Required for maturation of extramitochondrial Fe/S proteins. May play a role in the transfer of pre-assembled Fe/S clusters to target apoproteins. The chain is Cytosolic Fe-S cluster assembly factor NAR1 (NAR1) from Sclerotinia sclerotiorum (strain ATCC 18683 / 1980 / Ss-1) (White mold).